Consider the following 1500-residue polypeptide: Synaptonemal complex protein 2 (1500 aa).

Phosphoserine is present on residues Ser457 and Ser458. Phosphothreonine is present on Thr464. At Ser487 the chain carries Phosphoserine. Residue Thr496 is modified to Phosphothreonine. 4 positions are modified to phosphoserine: Ser500, Ser509, Ser518, and Ser527. The tract at residues 512–548 (KAVSKTSESGMDYAASPKSRQSDGRKRWNNRANHNKT) is disordered. Thr608 and Thr633 each carry phosphothreonine. A phosphoserine mark is found at Ser646, Ser650, and Ser741. Residues 796 to 820 (NPSDSMMSTRKLKEPQDGSGFSKKP) form a disordered region. A Phosphoserine modification is found at Ser914. Thr916 is modified (phosphothreonine). Disordered stretches follow at residues 940 to 1010 (LMDY…TSES) and 1029 to 1084 (KEET…SASV). Residues 948–958 (NTTKYKSRKSR) show a composition bias toward basic residues. Over residues 977–989 (MKNDYEVVVDGRT) the composition is skewed to basic and acidic residues. The span at 990-1000 (RLPRRATKTKK) shows a compositional bias: basic residues. Over residues 1059–1076 (PSEEQKNSSRLREGREDS) the composition is skewed to basic and acidic residues. Phosphoserine is present on residues Ser1115, Ser1117, Ser1124, Ser1133, Ser1140, Ser1144, Ser1156, Ser1159, and Ser1164. Thr1168 is subject to Phosphothreonine. A phosphoserine mark is found at Ser1183, Ser1213, and Ser1216. The interval 1208–1234 (YMEPESPESCDNHMQNKREGNHAASPL) is disordered. Residues 1217-1228 (CDNHMQNKREGN) show a composition bias toward basic and acidic residues. A phosphoserine mark is found at Ser1232, Ser1275, and Ser1277. Phosphothreonine is present on Thr1313. Residues 1388–1429 (LLDELEKVEKDSQTLRDLEKELVDIEEKLVQKMRAYHRCERE) adopt a coiled-coil conformation.

The protein belongs to the SYCP2 family. As to quaternary structure, component of the lateral elements of synaptonemal complexes. Heterodimer with SYCP3. Interacts with SMC1A and SMC3. Interacts with TEX11. Post-translationally, phosphorylated. As to expression, detected in testis and spermatocytes (at protein level).

It localises to the nucleus. Its subcellular location is the chromosome. In terms of biological role, major component of the axial/lateral elements of synaptonemal complexes (SCS) during meiotic prophase. Plays a role in the assembly of synaptonemal complexes. Required for normal meiotic chromosome synapsis during oocyte and spermatocyte development and for normal male and female fertility. Required for insertion of SYCP3 into synaptonemal complexes. May be involved in the organization of chromatin by temporarily binding to DNA scaffold attachment regions. Requires SYCP3, but not SYCP1, in order to be incorporated into the axial/lateral elements. The sequence is that of Synaptonemal complex protein 2 (Sycp2) from Mus musculus (Mouse).